Consider the following 140-residue polypeptide: Holo-[acyl-carrier-protein] synthase (140 aa).

Mg(2+) contacts are provided by Asp8 and Glu62.

It belongs to the P-Pant transferase superfamily. AcpS family. The cofactor is Mg(2+).

It is found in the cytoplasm. It carries out the reaction apo-[ACP] + CoA = holo-[ACP] + adenosine 3',5'-bisphosphate + H(+). Its function is as follows. Transfers the 4'-phosphopantetheine moiety from coenzyme A to a Ser of acyl-carrier-protein. The sequence is that of Holo-[acyl-carrier-protein] synthase from Cupriavidus necator (strain ATCC 17699 / DSM 428 / KCTC 22496 / NCIMB 10442 / H16 / Stanier 337) (Ralstonia eutropha).